A 119-amino-acid chain; its full sequence is Beta-2-microglobulin (119 aa).

The signal sequence occupies residues 1 to 20 (MGRFVAVALLVLLSLSGLET). The Ig-like C1-type domain maps to 25–114 (PKIQVYSRHP…VTFSTPKTVK (90 aa)). Residues C45 and C100 are joined by a disulfide bond.

This sequence belongs to the beta-2-microglobulin family. Heterodimer of an alpha chain and a beta chain. Beta-2-microglobulin is the beta-chain of major histocompatibility complex class I molecules.

It localises to the secreted. In terms of biological role, component of the class I major histocompatibility complex (MHC). Involved in the presentation of peptide antigens to the immune system. The protein is Beta-2-microglobulin (B2M) of Callicebus personatus nigrifrons (Black-fronted titi).